Reading from the N-terminus, the 562-residue chain is Arginine--tRNA ligase (562 aa).

Positions 129–139 (ANPTGPLHVGH) match the 'HIGH' region motif.

This sequence belongs to the class-I aminoacyl-tRNA synthetase family. In terms of assembly, monomer.

It is found in the cytoplasm. It catalyses the reaction tRNA(Arg) + L-arginine + ATP = L-arginyl-tRNA(Arg) + AMP + diphosphate. The sequence is that of Arginine--tRNA ligase (argS) from Xylella fastidiosa (strain 9a5c).